A 122-amino-acid polypeptide reads, in one-letter code: MIQQESRLRVADNTGAKEILTIRVLGGSGRRYAGIGDVIVATVKDAIPGGNVKKGDVVKAVIVRTVKERRRPDGSYIRFDENAAVILKNDGDPRGTRIFGPVGRELREKKFMKIISLAPEVL.

The protein belongs to the universal ribosomal protein uL14 family. Part of the 50S ribosomal subunit. Forms a cluster with proteins L3 and L19. In the 70S ribosome, L14 and L19 interact and together make contacts with the 16S rRNA in bridges B5 and B8.

In terms of biological role, binds to 23S rRNA. Forms part of two intersubunit bridges in the 70S ribosome. In Streptomyces coelicolor (strain ATCC BAA-471 / A3(2) / M145), this protein is Large ribosomal subunit protein uL14.